Consider the following 541-residue polypeptide: Beta-hexosaminidase 1 (541 aa).

Positions Met-1–Ser-20 are cleaved as a signal peptide. N-linked (GlcNAc...) asparagine glycosylation is found at Asn-44 and Asn-304. The cysteines at positions 295 and 337 are disulfide-linked. The active-site Proton donor is the Glu-332. N-linked (GlcNAc...) asparagine glycans are attached at residues Asn-340, Asn-352, and Asn-497. Cys-511 and Cys-538 form a disulfide bridge.

This sequence belongs to the glycosyl hydrolase 20 family. Post-translationally, N-glycosylated. Expressed in roots, leaves, stems, flowers and siliques.

The protein resides in the vacuole. The enzyme catalyses Hydrolysis of terminal non-reducing N-acetyl-D-hexosamine residues in N-acetyl-beta-D-hexosaminides.. With respect to regulation, inhibited by N-acetylcastanospermine, 2-acet-amido-1,2-dideoxynojirimycin and PUGNAc. In terms of biological role, has a broad substrate specificity. Can use synthetic substrates such as pyridylaminated chitotriose, pyridylaminated chitobiose, p-nitrophenyl-beta-N-acetylglucosaminide, p-nitrophenyl-2-acetamido-2-deoxy-beta-D-glucopyranoside (pNP-GlcNAc), p-nitrophenyl-2-acetamido-2-deoxy-beta-D-galactopyranoside (pNP-GalNAc), 4-methylumbelliferyl-2-acetamido-2-deoxy-beta-D-glucopyranoside (MU-GlcNAc), and 4-methylumbelliferyl-6-sulfo-2-acetamido-2-deoxy-beta-D-glucopyranoside (MU-GlcNAc-6SO(4)) as substrates. Removes terminal GlcNAc residues from alpha1,3- and alpha1,6-mannosyl branches of biantennary N-glycans without any strict branch preference. Required for the presence of paucimannosidic N-glycans in glycoproteins of roots and, to a lower extent, of leaves. The protein is Beta-hexosaminidase 1 (HEXO1) of Arabidopsis thaliana (Mouse-ear cress).